Here is a 240-residue protein sequence, read N- to C-terminus: Phosphoribosylaminoimidazole-succinocarboxamide synthase (240 aa).

Belongs to the SAICAR synthetase family.

It catalyses the reaction 5-amino-1-(5-phospho-D-ribosyl)imidazole-4-carboxylate + L-aspartate + ATP = (2S)-2-[5-amino-1-(5-phospho-beta-D-ribosyl)imidazole-4-carboxamido]succinate + ADP + phosphate + 2 H(+). The protein operates within purine metabolism; IMP biosynthesis via de novo pathway; 5-amino-1-(5-phospho-D-ribosyl)imidazole-4-carboxamide from 5-amino-1-(5-phospho-D-ribosyl)imidazole-4-carboxylate: step 1/2. This is Phosphoribosylaminoimidazole-succinocarboxamide synthase from Wolbachia sp. subsp. Drosophila simulans (strain wRi).